A 488-amino-acid chain; its full sequence is Inosine-5'-monophosphate dehydrogenase (488 aa).

2 CBS domains span residues 93–149 (VVTD…NQPV) and 153–214 (MTPK…CKDE). Residues Asp248 and 248–250 (DSS) contribute to the NAD(+) site. Lys267 is modified (N6-acetyllysine). 298–300 (GIG) contributes to the NAD(+) binding site. K(+) is bound by residues Gly300 and Gly302. Ser303 serves as a coordination point for IMP. Residue Cys305 participates in K(+) binding. Residue Cys305 is the Thioimidate intermediate of the active site. Residues 338 to 340 (DGG), 361 to 362 (GS), and 385 to 389 (YRGMG) each bind IMP. The active-site Proton acceptor is the Arg401. An IMP-binding site is contributed by Glu415. Lys428 carries the N6-acetyllysine modification. Glu469, Ser470, and His471 together coordinate K(+).

Belongs to the IMPDH/GMPR family. As to quaternary structure, homotetramer. It depends on K(+) as a cofactor.

It catalyses the reaction IMP + NAD(+) + H2O = XMP + NADH + H(+). The protein operates within purine metabolism; XMP biosynthesis via de novo pathway; XMP from IMP: step 1/1. With respect to regulation, mycophenolic acid (MPA) is a non-competitive inhibitor that prevents formation of the closed enzyme conformation by binding to the same site as the amobile flap. In contrast, mizoribine monophosphate (MZP) is a competitive inhibitor that induces the closed conformation. MPA is a potent inhibitor of mammalian IMPDHs but a poor inhibitor of the bacterial enzymes. MZP is a more potent inhibitor of bacterial IMPDH. Catalyzes the conversion of inosine 5'-phosphate (IMP) to xanthosine 5'-phosphate (XMP), the first committed and rate-limiting step in the de novo synthesis of guanine nucleotides, and therefore plays an important role in the regulation of cell growth. This chain is Inosine-5'-monophosphate dehydrogenase, found in Escherichia coli O157:H7.